The chain runs to 284 residues: MKQKVVSIGDINVANDLPFVLFGGMNVLESRDLAMRICEHYVTVTQKLGIPYVFKASFDKANRSSIHSYRGPGLEEGMKIFQELKQTFGVKIITDVHEASQAQPVADVVDVIQLPAFLARQTDLVEAMAKTGAVINVKKPQFVSPGQMGNIVDKFIEGGNDKVILCDRGANFGYDNLVVDMLGFGVMKKASNNSPVIFDVTHALQCRDPFGAASGGRRAQVSELARAGMAVGIAGLFIEAHPDPDHAKCDGPSALPLDKLEPFLKQMKAIDDLVKSFDELDTSK.

Belongs to the KdsA family.

It is found in the cytoplasm. The catalysed reaction is D-arabinose 5-phosphate + phosphoenolpyruvate + H2O = 3-deoxy-alpha-D-manno-2-octulosonate-8-phosphate + phosphate. It participates in carbohydrate biosynthesis; 3-deoxy-D-manno-octulosonate biosynthesis; 3-deoxy-D-manno-octulosonate from D-ribulose 5-phosphate: step 2/3. Its pathway is bacterial outer membrane biogenesis; lipopolysaccharide biosynthesis. The protein is 2-dehydro-3-deoxyphosphooctonate aldolase of Klebsiella pneumoniae subsp. pneumoniae (strain ATCC 700721 / MGH 78578).